Reading from the N-terminus, the 258-residue chain is Snake venom serine proteinase 5 (258 aa).

A signal peptide spans 1 to 18; it reads MVLIRVLANLLILQLSYA. A propeptide spanning residues 19–24 is cleaved from the precursor; that stretch reads QKSSEL. Residues 25 to 249 form the Peptidase S1 domain; sequence VVGGDECNIN…YNDWIQSIIA (225 aa). Intrachain disulfides connect Cys31–Cys163, Cys50–Cys66, Cys98–Cys256, Cys142–Cys210, Cys174–Cys189, and Cys200–Cys225. The N-linked (GlcNAc...) asparagine glycan is linked to Asn44. Active-site charge relay system residues include His65 and Asp110. Ser204 serves as the catalytic Charge relay system.

It belongs to the peptidase S1 family. Snake venom subfamily. Monomer. In terms of tissue distribution, expressed by the venom gland.

The protein resides in the secreted. Snake venom serine protease that may act in the hemostasis system of the prey. This chain is Snake venom serine proteinase 5, found in Crotalus adamanteus (Eastern diamondback rattlesnake).